Reading from the N-terminus, the 160-residue chain is Serine-protein kinase RsbW (160 aa).

This sequence belongs to the anti-sigma-factor family.

It carries out the reaction L-seryl-[protein] + ATP = O-phospho-L-seryl-[protein] + ADP + H(+). It catalyses the reaction L-threonyl-[protein] + ATP = O-phospho-L-threonyl-[protein] + ADP + H(+). In terms of biological role, negative regulator of sigma-B activity. Phosphorylates and inactivates its specific antagonist protein, RsbV. Upon phosphorylation of RsbV, RsbW is released and binds to sigma-B, thereby blocking its ability to form an RNA polymerase holoenzyme (E-sigma-B). In Bacillus licheniformis, this protein is Serine-protein kinase RsbW.